The chain runs to 466 residues: Cysteine--tRNA ligase (466 aa).

Cys-28 serves as a coordination point for Zn(2+). A 'HIGH' region motif is present at residues 30–40 (PTVYNYIHIGN). The Zn(2+) site is built by Cys-208, His-233, and Glu-237. A 'KMSKS' region motif is present at residues 265–269 (KMSKS). Position 268 (Lys-268) interacts with ATP.

Belongs to the class-I aminoacyl-tRNA synthetase family. Monomer. Requires Zn(2+) as cofactor.

Its subcellular location is the cytoplasm. The catalysed reaction is tRNA(Cys) + L-cysteine + ATP = L-cysteinyl-tRNA(Cys) + AMP + diphosphate. This Staphylococcus aureus (strain MRSA252) protein is Cysteine--tRNA ligase.